The sequence spans 329 residues: Trans-1,2-dihydrobenzene-1,2-diol dehydrogenase (329 aa).

Belongs to the Gfo/Idh/MocA family. Homodimer. In terms of tissue distribution, lens, liver and small intestine.

The enzyme catalyses (1R,2R)-1,2-dihydrobenzene-1,2-diol + NADP(+) = catechol + NADPH + H(+). It carries out the reaction D-xylose + NADP(+) = D-xylono-1,5-lactone + NADPH + H(+). Stimulated by various salts. The chain is Trans-1,2-dihydrobenzene-1,2-diol dehydrogenase (DHDH) from Oryctolagus cuniculus (Rabbit).